Reading from the N-terminus, the 368-residue chain is 1-deoxy-D-xylulose 5-phosphate reductoisomerase (368 aa).

NADPH is bound by residues Thr-7, Gly-8, Ser-9, Ile-10, Gly-31, Lys-32, Asn-33, and Asn-113. Position 114 (Lys-114) interacts with 1-deoxy-D-xylulose 5-phosphate. NADPH is bound at residue Glu-115. Asp-133 is a Mn(2+) binding site. Ser-134, Glu-135, Ser-158, and His-181 together coordinate 1-deoxy-D-xylulose 5-phosphate. Glu-135 is a Mn(2+) binding site. Gly-187 contributes to the NADPH binding site. Residues Ser-194, Asn-199, Lys-200, and Glu-203 each coordinate 1-deoxy-D-xylulose 5-phosphate. Residue Glu-203 coordinates Mn(2+).

It belongs to the DXR family. Mg(2+) serves as cofactor. The cofactor is Mn(2+).

The catalysed reaction is 2-C-methyl-D-erythritol 4-phosphate + NADP(+) = 1-deoxy-D-xylulose 5-phosphate + NADPH + H(+). Its pathway is isoprenoid biosynthesis; isopentenyl diphosphate biosynthesis via DXP pathway; isopentenyl diphosphate from 1-deoxy-D-xylulose 5-phosphate: step 1/6. Catalyzes the NADPH-dependent rearrangement and reduction of 1-deoxy-D-xylulose-5-phosphate (DXP) to 2-C-methyl-D-erythritol 4-phosphate (MEP). The chain is 1-deoxy-D-xylulose 5-phosphate reductoisomerase from Helicobacter pylori (strain HPAG1).